The primary structure comprises 465 residues: MMAETLTPRQIVEKLDQFIVGQKEAKKAVAIALRNRYRRSLLDEKLRDEVMPKNILMIGPTGVGKTEIARRLAKLVGAPFIKVEATKFTEVGYVGRDVESMVRDLVETSVRLVKERKMNEVKDRAEQQANKRLVELLVPGKPKQTIKNPLELLFGGQGAQADNSYSHEDEQVEQKRRQVAWQLANGQLENEMVTIEIEEQTPLWFDFLQGAGIEQMGMNMQDALSSLMPKRRKKRRLKVSEARKVLINEEAQKLIDMDEVTQEAVRLAEQSGIIFIDEIDKIARSGAVSGSADVSREGVQRDILPIVEGSTVMTKYGPVKTDHILFIAAGAFHMAKPSDLIPELQGRFPIRVELAKLSVDDFVRILVEPNNALIKQYQALLATEGISLEFSDDAIRKIAEVAFEVNQTTDNIGARRLHTILEKLLEDLLFEAPDIGIDKVVITPQYVEQKLGSIVKNKDLSEFIL.

Residues V20, 62–67 (GVGKTE), D277, E343, and R415 contribute to the ATP site.

Belongs to the ClpX chaperone family. HslU subfamily. As to quaternary structure, a double ring-shaped homohexamer of HslV is capped on each side by a ring-shaped HslU homohexamer. The assembly of the HslU/HslV complex is dependent on binding of ATP.

It is found in the cytoplasm. ATPase subunit of a proteasome-like degradation complex; this subunit has chaperone activity. The binding of ATP and its subsequent hydrolysis by HslU are essential for unfolding of protein substrates subsequently hydrolyzed by HslV. HslU recognizes the N-terminal part of its protein substrates and unfolds these before they are guided to HslV for hydrolysis. This chain is ATP-dependent protease ATPase subunit HslU, found in Geobacillus kaustophilus (strain HTA426).